Consider the following 248-residue polypeptide: Cytochrome c oxidase subunit 2 (248 aa).

The Mitochondrial intermembrane segment spans residues 1 to 39; that stretch reads MMKELLMNNMLNDVPTPWAMYFQDSATPNMEGIMELHNN. Residues 40-56 traverse the membrane as a helical segment; it reads VVFYLIIMLCFVTYMLY. Topologically, residues 57–87 are mitochondrial matrix; sequence NISTVYNKSAVAYKYMNHGQFIEMVWTTFPA. Residues 88-104 traverse the membrane as a helical segment; sequence VMLLIMAFPSFMLLYIC. The Mitochondrial intermembrane portion of the chain corresponds to 105–248; that stretch reads DEVMAPAMTI…ADFLTWIDEQ (144 aa). Cu cation-binding residues include His183, Cys218, Glu220, Cys222, His226, and Met229. Position 220 (Glu220) interacts with Mg(2+).

The protein belongs to the cytochrome c oxidase subunit 2 family. Component of the cytochrome c oxidase (complex IV, CIV), a multisubunit enzyme composed of a catalytic core of 3 subunits and several supernumerary subunits. The complex exists as a monomer or a dimer and forms supercomplexes (SCs) in the inner mitochondrial membrane with ubiquinol-cytochrome c oxidoreductase (cytochrome b-c1 complex, complex III, CIII). It depends on Cu cation as a cofactor.

It is found in the mitochondrion inner membrane. It catalyses the reaction 4 Fe(II)-[cytochrome c] + O2 + 8 H(+)(in) = 4 Fe(III)-[cytochrome c] + 2 H2O + 4 H(+)(out). Component of the cytochrome c oxidase, the last enzyme in the mitochondrial electron transport chain which drives oxidative phosphorylation. The respiratory chain contains 3 multisubunit complexes succinate dehydrogenase (complex II, CII), ubiquinol-cytochrome c oxidoreductase (cytochrome b-c1 complex, complex III, CIII) and cytochrome c oxidase (complex IV, CIV), that cooperate to transfer electrons derived from NADH and succinate to molecular oxygen, creating an electrochemical gradient over the inner membrane that drives transmembrane transport and the ATP synthase. Cytochrome c oxidase is the component of the respiratory chain that catalyzes the reduction of oxygen to water. Electrons originating from reduced cytochrome c in the intermembrane space (IMS) are transferred via the dinuclear copper A center (CU(A)) of subunit 2 and heme A of subunit 1 to the active site in subunit 1, a binuclear center (BNC) formed by heme A3 and copper B (CU(B)). The BNC reduces molecular oxygen to 2 water molecules using 4 electrons from cytochrome c in the IMS and 4 protons from the mitochondrial matrix. In Brettanomyces naardenensis (Yeast), this protein is Cytochrome c oxidase subunit 2 (COX2).